Here is a 141-residue protein sequence, read N- to C-terminus: Large ribosomal subunit protein uL11 (141 aa).

Belongs to the universal ribosomal protein uL11 family. Part of the ribosomal stalk of the 50S ribosomal subunit. Interacts with L10 and the large rRNA to form the base of the stalk. L10 forms an elongated spine to which L12 dimers bind in a sequential fashion forming a multimeric L10(L12)X complex. In terms of processing, one or more lysine residues are methylated.

Forms part of the ribosomal stalk which helps the ribosome interact with GTP-bound translation factors. This is Large ribosomal subunit protein uL11 from Synechococcus sp. (strain JA-3-3Ab) (Cyanobacteria bacterium Yellowstone A-Prime).